Reading from the N-terminus, the 356-residue chain is MDAIVVSKADRTPRLVDRPRPDPTPGSVLVRTLRVGVDGTDHEVIAGTHGGFPEDADELVLGHEAIGVVADPTDTRFSAGQLVAPTVRRPRGDPTPQFDRGQPDMAAPGTYVERGIDGADGFMADYFTSPADALVALPDSLAAHGFLTEPVSVAEKAIELALASRSAFDWRPDSALVLGNGSLGLLTLAILAARDDTETLYCLGRRSRPDPTIDIIERLGATYIDSRTTPVADIPAAHQPVDMVYEATGHAKHAFDAIDALAPAGVAALLGVPAAGWTFEVPGSDLHRSLVLENKAVVGSVNSNARHFRAAADTLAALPDWLCDAIVTGVHDTAAFADAFRDGETSIKTAVQFDTR.

The interval 1–26 (MDAIVVSKADRTPRLVDRPRPDPTPG) is disordered. The segment covering 8 to 21 (KADRTPRLVDRPRP) has biased composition (basic and acidic residues). Residue Asp38 participates in Zn(2+) binding. Position 40 (Thr40) interacts with substrate. 2 residues coordinate Zn(2+): His63 and Glu64. Residues 86 to 107 (TVRRPRGDPTPQFDRGQPDMAA) are disordered. Substrate is bound by residues Glu113 and Glu149. Residue Glu149 coordinates Zn(2+). NADP(+)-binding positions include 180-183 (NGSL), 205-206 (RR), 270-272 (LGV), and 300-302 (SVN). Asn302 lines the substrate pocket.

The protein belongs to the zinc-containing alcohol dehydrogenase family. Glucose 1-dehydrogenase subfamily. It depends on Zn(2+) as a cofactor.

The enzyme catalyses D-glucose + NAD(+) = D-glucono-1,5-lactone + NADH + H(+). It catalyses the reaction D-glucose + NADP(+) = D-glucono-1,5-lactone + NADPH + H(+). Catalyzes the NAD(P)(+)-dependent oxidation of D-glucose to D-gluconate via gluconolactone. Can utilize both NAD(+) and NADP(+) as electron acceptor. Is involved in the degradation of glucose through a modified Entner-Doudoroff pathway. The sequence is that of Glucose 1-dehydrogenase from Halobacterium salinarum (strain ATCC 700922 / JCM 11081 / NRC-1) (Halobacterium halobium).